The sequence spans 250 residues: Ribose-5-phosphate isomerase A (250 aa).

Residues 33–36 (TGST), 89–92 (DGAD), and 102–105 (KGGG) each bind substrate. Glu-111 acts as the Proton acceptor in catalysis. Lys-129 serves as a coordination point for substrate.

The protein belongs to the ribose 5-phosphate isomerase family. In terms of assembly, homodimer.

It catalyses the reaction aldehydo-D-ribose 5-phosphate = D-ribulose 5-phosphate. It functions in the pathway carbohydrate degradation; pentose phosphate pathway; D-ribose 5-phosphate from D-ribulose 5-phosphate (non-oxidative stage): step 1/1. Catalyzes the reversible conversion of ribose-5-phosphate to ribulose 5-phosphate. The protein is Ribose-5-phosphate isomerase A of Cereibacter sphaeroides (strain ATCC 17025 / ATH 2.4.3) (Rhodobacter sphaeroides).